Reading from the N-terminus, the 239-residue chain is Proteasome activator complex subunit 2 (239 aa).

Alanine 2 is subject to N-acetylalanine. Residue serine 10 is modified to Phosphoserine.

The protein belongs to the PA28 family. As to quaternary structure, heterodimer of PSME1 and PSME2, which forms a hexameric ring.

In terms of biological role, implicated in immunoproteasome assembly and required for efficient antigen processing. The PA28 activator complex enhances the generation of class I binding peptides by altering the cleavage pattern of the proteasome. The protein is Proteasome activator complex subunit 2 (PSME2) of Homo sapiens (Human).